A 791-amino-acid chain; its full sequence is AP-1 complex subunit gamma-like 2 (791 aa).

Residues Ala671 to Pro786 form the GAE domain.

This sequence belongs to the adaptor complexes large subunit family. As to quaternary structure, may interact with AP1S1/Sigma1A-adaptin and AP1S2/Sigma1B-adaptin. Probably does not interact with APB1. Interacts (via GAE domain) with RABEP1, NECAP1, CLINT1 and AFTPH/aftiphilin. Interacts with HBV major surface antigen L. Interacts with HBV core protein C in a ubiquitin-dependent manner. Binds ubiquitin. Widely expressed.

It is found in the golgi apparatus membrane. Its subcellular location is the cytoplasmic vesicle membrane. It localises to the endosome membrane. May function in protein sorting in late endosomes or multivesucular bodies (MVBs). Involved in MVB-assisted maturation of hepatitis B virus (HBV). This is AP-1 complex subunit gamma-like 2 (Ap1g2) from Mus musculus (Mouse).